We begin with the raw amino-acid sequence, 185 residues long: Acireductone dioxygenase (185 aa).

His96, His98, Glu102, and His140 together coordinate Fe(2+). His96, His98, Glu102, and His140 together coordinate Ni(2+).

The protein belongs to the acireductone dioxygenase (ARD) family. As to quaternary structure, monomer. The cofactor is Fe(2+). Requires Ni(2+) as cofactor.

It catalyses the reaction 1,2-dihydroxy-5-(methylsulfanyl)pent-1-en-3-one + O2 = 3-(methylsulfanyl)propanoate + CO + formate + 2 H(+). The catalysed reaction is 1,2-dihydroxy-5-(methylsulfanyl)pent-1-en-3-one + O2 = 4-methylsulfanyl-2-oxobutanoate + formate + 2 H(+). Its pathway is amino-acid biosynthesis; L-methionine biosynthesis via salvage pathway; L-methionine from S-methyl-5-thio-alpha-D-ribose 1-phosphate: step 5/6. Catalyzes 2 different reactions between oxygen and the acireductone 1,2-dihydroxy-3-keto-5-methylthiopentene (DHK-MTPene) depending upon the metal bound in the active site. Fe-containing acireductone dioxygenase (Fe-ARD) produces formate and 2-keto-4-methylthiobutyrate (KMTB), the alpha-ketoacid precursor of methionine in the methionine recycle pathway. Ni-containing acireductone dioxygenase (Ni-ARD) produces methylthiopropionate, carbon monoxide and formate, and does not lie on the methionine recycle pathway. In Marinobacter nauticus (strain ATCC 700491 / DSM 11845 / VT8) (Marinobacter aquaeolei), this protein is Acireductone dioxygenase.